Consider the following 489-residue polypeptide: MGLFGMMKFAHTHHLVKRQGLGAPAGYFTPIAVDLWNVMYTLVVKYQRRYPSYDREAITLHCLCRLLKVFTQKSLFPIFVTDRGVNCMEPVVFGAKAILARTTAQCRTDEEASDVDASPPPSPITDSRPSSAFSNMRRRGTSLASGTRGTAGSGAALPSAAPSKPALRLAHLFCIRVLRALGYAYINSGQLEADDACANLYHTNTVAYVYTTDTDLLLMGCDIVLDISACYIPTINCRDILKYFKMSYPQFLALFVRCHTDLHPNNTYASVEDVLRECHWTPPSRSQTRRAIRREHTSSRSTETRPPLPPAAGGTEMRVSWTEILTQQIAGGYEDDEDLPLDPRDVTGGHPGPRSSSSEILTPPELVQVPNAQLLEEHRSYVASRRRHVIHDAPESLDWLPDPMTITELVEHRYIKYVISLIGPKERGPWTLLKRLPIYQDIRDENLARSIVTRHITAPDIADRFLEQLRTQAPPPAFYKDVLAKFWDE.

Disordered stretches follow at residues 110–135, 142–161, 285–316, and 333–363; these read EEASDVDASPPPSPITDSRPSSAFSN, SLASGTRGTAGSGAALPSAA, RSQTRRAIRREHTSSRSTETRPPLPPAAGGTE, and YEDDEDLPLDPRDVTGGHPGPRSSSSEILTP. Polar residues predominate over residues 124–134; it reads ITDSRPSSAFS.

The protein belongs to the herpesviridae VHS protein family. Interacts with human EIF4H, EIF4A1 and EIF4A2; interaction with eIF4AI and EIF4A2 presumably allows Vhs protein to associate with the eIF4F cap-binding complex.

It localises to the virion. Minor structural protein that acts as an endoribonuclease during lytic infection. Degrades host mRNAs in the cytoplasm by cutting them at preferred sites, including some in regions of translation initiation. Together with inhibition of host splicing by ICP27, contributes to an overall decrease in host protein synthesis. Also, after the onset of viral transcription, accelerates the turnover of viral mRNA, thereby facilitating the sequential expression of different classes of viral genes. Binds translation initiation factors eIF4H, eIF4AI, and eIF4AII, thereby may interact directly with the translation initiation complex and thus digest specifically mRNAs. Also impedes antigen presentation by major histocompatibility complex class I and class II molecules, inhibits secretion of cytokines that would otherwise recruit lymphocytes and neutrophils cells to the site of infection and blocks the activation of dendritic cells. Impedes the alpha/beta interferon-mediated response to infection by evading the cGAS/ STING-mediated DNA-sensing pathway and degrading CGAS via its RNase activity. The sequence is that of Virion host shutoff protein (UL41) from Human herpesvirus 1 (strain KOS) (HHV-1).